The sequence spans 157 residues: Large ribosomal subunit protein uL10 (157 aa).

This sequence belongs to the universal ribosomal protein uL10 family. In terms of assembly, part of the ribosomal stalk of the 50S ribosomal subunit. The N-terminus interacts with L11 and the large rRNA to form the base of the stalk. The C-terminus forms an elongated spine to which L12 dimers bind in a sequential fashion forming a multimeric L10(L12)X complex.

Forms part of the ribosomal stalk, playing a central role in the interaction of the ribosome with GTP-bound translation factors. The chain is Large ribosomal subunit protein uL10 from Campylobacter hominis (strain ATCC BAA-381 / DSM 21671 / CCUG 45161 / LMG 19568 / NCTC 13146 / CH001A).